The following is a 165-amino-acid chain: V-type proton ATPase 16 kDa proteolipid subunit (165 aa).

Residues 1-10 (MPSTFSGDET) are Lumenal-facing. Residues 11-33 (APFFGFLGAAAALVFSCMGAAYG) traverse the membrane as a helical segment. The Cytoplasmic portion of the chain corresponds to 34–55 (TAKSGVGVASMGVMRPELVMKS). Residues 56-76 (IVPVVMAGVLGIYGLIIAVII) traverse the membrane as a helical segment. Topologically, residues 77 to 95 (STGINPKTKSYYLFDGYAH) are lumenal. A helical membrane pass occupies residues 96–117 (LSSGLACGLAGLSAGMAIGIVG). The Cytoplasmic portion of the chain corresponds to 118-129 (DAGVRANAQQPK). The helical transmembrane segment at 130–155 (LFVGMILILIFAEALALYGLIVGIIL) threads the bilayer. The Lumenal segment spans residues 156–165 (SSRAGQSRAE).

The protein belongs to the V-ATPase proteolipid subunit family. V-ATPase is a heteromultimeric enzyme composed of a peripheral catalytic V1 complex (main components: subunits A, B, C, D, E, and F) attached to an integral membrane V0 proton pore complex (main component: the proteolipid protein; which is present as a hexamer that forms the proton-conducting pore).

It localises to the vacuole membrane. Functionally, proton-conducting pore forming subunit of the membrane integral V0 complex of vacuolar ATPase. V-ATPase is responsible for acidifying a variety of intracellular compartments in eukaryotic cells. In Nicotiana tabacum (Common tobacco), this protein is V-type proton ATPase 16 kDa proteolipid subunit.